Consider the following 294-residue polypeptide: Cell division control protein 2 homolog 2 (294 aa).

One can recognise a Protein kinase domain in the interval 4 to 287 (YEKVEKIGEG…ARGALEHEYF (284 aa)). Residues 10 to 18 (IGEGTYGVV) and lysine 33 contribute to the ATP site. A Phosphothreonine modification is found at threonine 14. At tyrosine 15 the chain carries Phosphotyrosine. The Proton acceptor role is filled by aspartate 127. Residue threonine 161 is modified to Phosphothreonine; by CAK.

It belongs to the protein kinase superfamily. CMGC Ser/Thr protein kinase family. CDC2/CDKX subfamily. As to expression, found in most organs including root, young leaf, stem, vegetative meristem and flower bud.

It catalyses the reaction L-seryl-[protein] + ATP = O-phospho-L-seryl-[protein] + ADP + H(+). The catalysed reaction is L-threonyl-[protein] + ATP = O-phospho-L-threonyl-[protein] + ADP + H(+). Its activity is regulated as follows. Phosphorylation at Thr-14 or Tyr-15 inactivates the enzyme, while phosphorylation at Thr-161 activates it. Functionally, plays a key role in the control of the eukaryotic cell cycle. Component of the kinase complex that phosphorylates the repetitive C-terminus of RNA polymerase II. The sequence is that of Cell division control protein 2 homolog 2 (CDC2B) from Medicago sativa (Alfalfa).